We begin with the raw amino-acid sequence, 245 residues long: 1-(5-phosphoribosyl)-5-[(5-phosphoribosylamino)methylideneamino] imidazole-4-carboxamide isomerase (245 aa).

The active-site Proton acceptor is the Asp7. The Proton donor role is filled by Asp129.

It belongs to the HisA/HisF family.

Its subcellular location is the cytoplasm. It carries out the reaction 1-(5-phospho-beta-D-ribosyl)-5-[(5-phospho-beta-D-ribosylamino)methylideneamino]imidazole-4-carboxamide = 5-[(5-phospho-1-deoxy-D-ribulos-1-ylimino)methylamino]-1-(5-phospho-beta-D-ribosyl)imidazole-4-carboxamide. Its pathway is amino-acid biosynthesis; L-histidine biosynthesis; L-histidine from 5-phospho-alpha-D-ribose 1-diphosphate: step 4/9. The protein is 1-(5-phosphoribosyl)-5-[(5-phosphoribosylamino)methylideneamino] imidazole-4-carboxamide isomerase of Vibrio campbellii (strain ATCC BAA-1116).